The following is a 148-amino-acid chain: Large ribosomal subunit protein bL9 (148 aa).

It belongs to the bacterial ribosomal protein bL9 family.

Its function is as follows. Binds to the 23S rRNA. This Listeria monocytogenes serotype 4a (strain HCC23) protein is Large ribosomal subunit protein bL9.